A 112-amino-acid polypeptide reads, in one-letter code: Tetracenomycin-F1 monooxygenase (112 aa).

The region spanning 11–100 (FTLVNVFGVA…SRPKPIFCEV (90 aa)) is the ABM domain.

Homotrimer.

The enzyme catalyses tetracenomycin F1 + O2 = tetracenomycin D3 + H2O + H(+). The protein operates within antibiotic biosynthesis; tetracenomycin C biosynthesis. With respect to regulation, inhibited by p-chloromercuribenzoic acid, N-ethylmaleimide and diethyl pyrocarbonate. In terms of biological role, oxygenase required for conversion of tetracenomycin F1 to tetracenomycin D3. In Streptomyces glaucescens, this protein is Tetracenomycin-F1 monooxygenase (tcmH).